Consider the following 835-residue polypeptide: Protein bicaudal D homolog 1 (835 aa).

Residues 1 to 264 are a coiled coil; it reads MAAEEALKTV…YINLSDSHIS (264 aa). The segment at 278 to 297 is disordered; sequence EPNNDDKMNGHIHGPLGKLN. A coiled-coil region spans residues 320–519; sequence ELNISEIQKL…TFSEELAQLY (200 aa). 2 disordered regions span residues 545 to 616 and 800 to 835; these read RSGS…LDTS and DHEQ…SAHN. Residues 557–572 are compositionally biased toward low complexity; sequence GLLSPRLSRRGVSSPV. A compositionally biased stretch (basic and acidic residues) spans 581 to 590; sequence VSKENTETSK. The span at 591-604 shows a compositional bias: low complexity; that stretch reads EPSPTKTPTISPVI. Residues 663–803 adopt a coiled-coil conformation; the sequence is IDKDKEALME…LEDLEFDHEQ (141 aa). Residues 663-803 form an interaction with RAB6A region; the sequence is IDKDKEALME…LEDLEFDHEQ (141 aa).

This sequence belongs to the BicD family. Interacts with RAB6A. Interacts (via C-terminus) with RAB6B (GTP-bound); the interaction is direct. Interacts with CLIP-115 and KIFC2. Expressed in the brain, heart and skeletal muscle.

It localises to the golgi apparatus. Functionally, regulates coat complex coatomer protein I (COPI)-independent Golgi-endoplasmic reticulum transport by recruiting the dynein-dynactin motor complex. The chain is Protein bicaudal D homolog 1 (Bicd1) from Mus musculus (Mouse).